The primary structure comprises 503 residues: Cytochrome P450 3A8 (503 aa).

C442 lines the heme pocket.

It belongs to the cytochrome P450 family. Requires heme as cofactor.

It localises to the endoplasmic reticulum membrane. It is found in the microsome membrane. It carries out the reaction an organic molecule + reduced [NADPH--hemoprotein reductase] + O2 = an alcohol + oxidized [NADPH--hemoprotein reductase] + H2O + H(+). Its function is as follows. Catalyzes nifedipine and nilvadipine oxidations. The chain is Cytochrome P450 3A8 (CYP3A8) from Macaca fascicularis (Crab-eating macaque).